The chain runs to 100 residues: NADH-quinone oxidoreductase subunit K (100 aa).

3 consecutive transmembrane segments (helical) span residues 2–22 (ITLS…LIGI), 29–49 (IMLF…LAAI), and 63–83 (LFIV…LILW).

This sequence belongs to the complex I subunit 4L family. In terms of assembly, NDH-1 is composed of 14 different subunits. Subunits NuoA, H, J, K, L, M, N constitute the membrane sector of the complex.

The protein resides in the cell inner membrane. The enzyme catalyses a quinone + NADH + 5 H(+)(in) = a quinol + NAD(+) + 4 H(+)(out). Its function is as follows. NDH-1 shuttles electrons from NADH, via FMN and iron-sulfur (Fe-S) centers, to quinones in the respiratory chain. The immediate electron acceptor for the enzyme in this species is believed to be ubiquinone. Couples the redox reaction to proton translocation (for every two electrons transferred, four hydrogen ions are translocated across the cytoplasmic membrane), and thus conserves the redox energy in a proton gradient. The polypeptide is NADH-quinone oxidoreductase subunit K (Campylobacter curvus (strain 525.92)).